A 545-amino-acid chain; its full sequence is Envelope glycoprotein E (545 aa).

Positions 1 to 20 (MARGAGLVFFVGVWVVSCLA) are cleaved as a signal peptide. Topologically, residues 21–414 (AAPRTSWKRV…PAPSARGPLR (394 aa)) are virion surface. The interaction with gI stretch occupies residues 61-86 (CGPLRPSWVALWPPRRVLETVVDAAC). Asparagine 122 carries N-linked (GlcNAc...) asparagine; by host glycosylation. The disordered stretch occupies residues 162-206 (APVPTPTPDDYDEEDDAGVTNARRSAFPPQPPPRRPPVAPPTHPR). A Sulfotyrosine; by host modification is found at tyrosine 172. Residues 179-188 (GVTNARRSAF) are compositionally biased toward low complexity. Positions 189–204 (PPQPPPRRPPVAPPTH) are enriched in pro residues. The interval 230 to 375 (APGETFGTNV…GHMTISTAAQ (146 aa)) is fc-binding. N-linked (GlcNAc...) asparagine; by host glycosylation occurs at asparagine 238. 3 disulfide bridges follow: cysteine 266–cysteine 292, cysteine 275–cysteine 284, and cysteine 309–cysteine 318. Residues 386 to 408 (PQRQPEPVEPTRPHVRAPHPAPS) form a disordered region. A helical transmembrane segment spans residues 415-435 (LGAVLGAALLLAALGLSAWAC). Residues 436–545 (MTCWRRRSWR…SQASYPSVLW (110 aa)) lie on the Intravirion side of the membrane. 2 consecutive short sequence motifs (internalization motif) follow at residues 458 to 461 (YIRV) and 467 to 470 (YADW). Residues 465 to 490 (ELYADWSSDSEGERDGSLWQDPPERP) form an interaction with VP22 and UL11 region. The interval 470-545 (WSSDSEGERD…SQASYPSVLW (76 aa)) is disordered. Residues serine 471 and serine 472 each carry the phosphoserine; by host CK2 modification. The interval 471–479 (SSDSEGERD) is acidic. Basic and acidic residues predominate over residues 475-491 (EGERDGSLWQDPPERPD). Serine 498 carries the phosphoserine modification.

The protein belongs to the alphaherpesvirinae glycoprotein E family. In terms of assembly, interacts with gI; this interaction enhances the Fc receptor function of gE. The heterodimer gE/gI interacts with the Fc part of host IgG. Interacts (via C-terminus) with VP22 tegument protein; this interaction is necessary for the recruitment of VP22 to the Golgi and its packaging into virions. Interacts (via C-terminus) with UL11 tegument protein. Phosphorylated on serines within the acidic cluster. Phosphorylation determines whether endocytosed viral gE traffics to the trans-Golgi network or recycles to the cell membrane. In terms of processing, N-glycosylated, and sulfated.

It localises to the virion membrane. It is found in the host cell membrane. The protein resides in the host cell junction. The protein localises to the host Golgi apparatus membrane. Its subcellular location is the host endosome membrane. In epithelial cells, the heterodimer gE/gI is required for the cell-to-cell spread of the virus, by sorting nascent virions to cell junctions. Once the virus reaches the cell junctions, virus particles can spread to adjacent cells extremely rapidly through interactions with cellular receptors that accumulate at these junctions. Implicated in basolateral spread in polarized cells. In neuronal cells, gE/gI is essential for the anterograde spread of the infection throughout the host nervous system. Together with US9, the heterodimer gE/gI is involved in the sorting and transport of viral structural components toward axon tips. Its function is as follows. The heterodimer gE/gI serves as a receptor for the Fc part of host IgG. Dissociation of gE/gI from IgG occurs at acidic pH. May thus be involved in anti-HSV antibodies bipolar bridging, followed by intracellular endocytosis and degradation, thereby interfering with host IgG-mediated immune responses. This Human herpesvirus 2 (strain HG52) (HHV-2) protein is Envelope glycoprotein E (gE).